Consider the following 328-residue polypeptide: Malate dehydrogenase (328 aa).

NAD(+) is bound at residue 11 to 17 (GAAGQIG). 2 residues coordinate substrate: R94 and R100. Residues N107, Q114, and 131–133 (VGN) contribute to the NAD(+) site. Substrate is bound by residues N133 and R164. H189 serves as the catalytic Proton acceptor.

It belongs to the LDH/MDH superfamily. MDH type 2 family.

It carries out the reaction (S)-malate + NAD(+) = oxaloacetate + NADH + H(+). In terms of biological role, catalyzes the reversible oxidation of malate to oxaloacetate. This chain is Malate dehydrogenase, found in Xanthomonas campestris pv. campestris (strain 8004).